The chain runs to 721 residues: Peptide-N(4)-(N-acetyl-beta-glucosaminyl)asparagine amidase (721 aa).

Zn(2+)-binding residues include Cys193, Cys196, Cys225, and Cys228. Residue Cys251 is the Nucleophile of the active site. Catalysis depends on residues His278 and Asp295.

This sequence belongs to the transglutaminase-like superfamily. PNGase family. It depends on Zn(2+) as a cofactor.

It localises to the cytoplasm. The catalysed reaction is Hydrolysis of an N(4)-(acetyl-beta-D-glucosaminyl)asparagine residue in which the glucosamine residue may be further glycosylated, to yield a (substituted) N-acetyl-beta-D-glucosaminylamine and a peptide containing an aspartate residue.. Specifically deglycosylates the denatured form of N-linked glycoproteins in the cytoplasm and assists their proteasome-mediated degradation. Cleaves the beta-aspartyl-glucosamine (GlcNAc) of the glycan and the amide side chain of Asn, converting Asn to Asp. Prefers proteins containing high-mannose over those bearing complex type oligosaccharides. Can recognize misfolded proteins in the endoplasmic reticulum that are exported to the cytosol to be destroyed and deglycosylate them, while it has no activity toward native proteins. Deglycosylation is a prerequisite for subsequent proteasome-mediated degradation of some, but not all, misfolded glycoproteins. In Arabidopsis thaliana (Mouse-ear cress), this protein is Peptide-N(4)-(N-acetyl-beta-glucosaminyl)asparagine amidase (PNG1).